The chain runs to 101 residues: Replication restart protein PriB (101 aa).

Residues 1-101 enclose the SSB domain; that stretch reads MATNHLVLSG…LHAENVELKT (101 aa).

This sequence belongs to the PriB family. As to quaternary structure, homodimer. Interacts with PriA and DnaT. Component of the replication restart primosome. Primosome assembly occurs via a 'hand-off' mechanism. PriA binds to replication forks, subsequently PriB then DnaT bind; DnaT then displaces ssDNA to generate the helicase loading substrate.

Its function is as follows. Involved in the restart of stalled replication forks, which reloads the replicative helicase on sites other than the origin of replication; the PriA-PriB pathway is the major replication restart pathway. During primosome assembly it facilitates complex formation between PriA and DnaT on DNA; stabilizes PriA on DNA. Stimulates the DNA unwinding activity of PriA helicase. The protein is Replication restart protein PriB of Shewanella woodyi (strain ATCC 51908 / MS32).